Reading from the N-terminus, the 105-residue chain is Cuticle protein AMP1B (105 aa).

The segment at 1–21 (DRDAQTLTDERSDQGDGNFRY) is disordered. The 66-residue stretch at 16–81 (DGNFRYEFET…PSSDLLPVPP (66 aa)) folds into the Chitin-binding type R&amp;R domain.

As to expression, arthrodial membrane.

In Homarus americanus (American lobster), this protein is Cuticle protein AMP1B.